The chain runs to 491 residues: Glutamyl-tRNA(Gln) amidotransferase subunit A (491 aa).

Active-site charge relay system residues include Lys80 and Ser155. Ser179 acts as the Acyl-ester intermediate in catalysis.

The protein belongs to the amidase family. GatA subfamily. In terms of assembly, heterotrimer of A, B and C subunits.

The catalysed reaction is L-glutamyl-tRNA(Gln) + L-glutamine + ATP + H2O = L-glutaminyl-tRNA(Gln) + L-glutamate + ADP + phosphate + H(+). Allows the formation of correctly charged Gln-tRNA(Gln) through the transamidation of misacylated Glu-tRNA(Gln) in organisms which lack glutaminyl-tRNA synthetase. The reaction takes place in the presence of glutamine and ATP through an activated gamma-phospho-Glu-tRNA(Gln). The sequence is that of Glutamyl-tRNA(Gln) amidotransferase subunit A from Salinispora arenicola (strain CNS-205).